The following is a 256-amino-acid chain: MAALELDLFLCRTDNYGVLLHDRLSGATASIDAPEERPILDALERRGWQLTHILTTHHHGDHVAANASLKERFGLTIIGPKNEASKIPGIDRTVGHGDRFDFAGHPVDVIETPGHTSGHVCYHLPEDKLLFAADTLFALGCGRLFEGTADTMWQSLSRLMALPDDTAIYFGHEYTLANAHFAITVDPENSALKERAAEIEETRSDGGFTAPTTMGLEKRTNPFLRAGDPKIRALLGMEKASDAAVFAEIRKRKDNF.

Histidine 57, histidine 59, aspartate 61, histidine 62, histidine 115, aspartate 134, and histidine 172 together coordinate Zn(2+).

This sequence belongs to the metallo-beta-lactamase superfamily. Glyoxalase II family. In terms of assembly, monomer. It depends on Zn(2+) as a cofactor.

The enzyme catalyses an S-(2-hydroxyacyl)glutathione + H2O = a 2-hydroxy carboxylate + glutathione + H(+). It participates in secondary metabolite metabolism; methylglyoxal degradation; (R)-lactate from methylglyoxal: step 2/2. In terms of biological role, thiolesterase that catalyzes the hydrolysis of S-D-lactoyl-glutathione to form glutathione and D-lactic acid. In Rhizobium meliloti (strain 1021) (Ensifer meliloti), this protein is Hydroxyacylglutathione hydrolase.